Here is a 205-residue protein sequence, read N- to C-terminus: MIPVCQKFEQTFIKDILSLLVLYMKTKMINLVKKEEEDKLNQITESIHDKLTVSSNDNKVDPNLSSIVFTGLYYILKVALKKKVSNQIFVADITDLKLPQNLITDLTNIYNTQSKDLAERSNNDKILFPQLSSFKWRVDVIISSSFTSRVLNPVILMEMNDTNGKSKVFEVSIDNFHKLRYNAAKLLKDLEDLEQIQILSKLENK.

Residues 130-194 enclose the COMM domain; the sequence is QLSSFKWRVD…KLLKDLEDLE (65 aa).

This sequence belongs to the COMM domain-containing protein 5 family. As to quaternary structure, component of the commander complex consisting of the CCC subcomplex and the retriever subcomplex. Component of the CCC subcomplex.

Its function is as follows. Scaffold protein in the commander complex that is essential for endosomal recycling of transmembrane cargos; the commander complex is composed of the CCC subcomplex and the retriever subcomplex. This is COMM domain-containing protein 5 (commd5) from Dictyostelium discoideum (Social amoeba).